The sequence spans 189 residues: uncharacterized protein (189 aa).

It belongs to the isochorismatase family.

This is an uncharacterized protein from Bacillus subtilis (strain 168).